The following is a 289-amino-acid chain: Melatonin receptor type 1B (289 aa).

At glycine 1–asparagine 2 the chain is on the cytoplasmic side. A helical transmembrane segment spans residues alanine 3–valine 23. Residues leucine 24–valine 41 lie on the Extracellular side of the membrane. An intrachain disulfide couples cysteine 39 to cysteine 116. A helical membrane pass occupies residues serine 42–isoleucine 62. Topologically, residues asparagine 63 to tryptophan 81 are cytoplasmic. The helical transmembrane segment at asparagine 82 to phenylalanine 102 threads the bilayer. Residues phenylalanine 103–tyrosine 126 are Extracellular-facing. Residues threonine 127 to leucine 147 form a helical membrane-spanning segment. Topologically, residues arginine 148–methionine 179 are cytoplasmic. The chain crosses the membrane as a helical span at residues phenylalanine 180 to valine 200. Residues alanine 201 to glutamate 213 lie on the Extracellular side of the membrane. Residues tryptophan 214–tyrosine 234 traverse the membrane as a helical segment. The Cytoplasmic segment spans residues glycine 235–leucine 289. A disordered region spans residues lysine 264 to leucine 289.

This sequence belongs to the G-protein coupled receptor 1 family. In terms of tissue distribution, brain and kidney, with trace levels in lungs.

It is found in the cell membrane. High affinity receptor for melatonin. The activity of this receptor is mediated by pertussis toxin sensitive G proteins that inhibits adenylate cyclase activity. The sequence is that of Melatonin receptor type 1B from Gallus gallus (Chicken).